Consider the following 324-residue polypeptide: NAC domain-containing protein 21/22 (324 aa).

Residues 19-171 (LPPGFRFHPK…DWVLCRVFHK (153 aa)) enclose the NAC domain. Residues 120 to 137 (RKTLVFYQGRAPRGRKTD) carry the Bipartite nuclear localization signal motif.

As to quaternary structure, dimer. Interacts with SINAT5. In terms of processing, ubiquitinated. The interaction with SINAT5 mediate its proteasome-dependent degradation. Predominantly expressed in the root tip and in lateral root initiation sites. Also detected in expanding cotyledon, and in leaf primordia.

The protein localises to the nucleus. In terms of biological role, transcriptional activator that mediates auxin signaling to promote lateral root development. Activates the expression of two downstream auxin-responsive genes, DBP and AIR3. This chain is NAC domain-containing protein 21/22 (NAC021), found in Arabidopsis thaliana (Mouse-ear cress).